Reading from the N-terminus, the 286-residue chain is Phosphatidylserine decarboxylase proenzyme (286 aa).

Catalysis depends on charge relay system; for autoendoproteolytic cleavage activity residues D90, H147, and S250. Residue S250 is the Schiff-base intermediate with substrate; via pyruvic acid; for decarboxylase activity of the active site. Residue S250 is modified to Pyruvic acid (Ser); by autocatalysis.

It belongs to the phosphatidylserine decarboxylase family. PSD-B subfamily. Prokaryotic type I sub-subfamily. Heterodimer of a large membrane-associated beta subunit and a small pyruvoyl-containing alpha subunit. Pyruvate serves as cofactor. Is synthesized initially as an inactive proenzyme. Formation of the active enzyme involves a self-maturation process in which the active site pyruvoyl group is generated from an internal serine residue via an autocatalytic post-translational modification. Two non-identical subunits are generated from the proenzyme in this reaction, and the pyruvate is formed at the N-terminus of the alpha chain, which is derived from the carboxyl end of the proenzyme. The autoendoproteolytic cleavage occurs by a canonical serine protease mechanism, in which the side chain hydroxyl group of the serine supplies its oxygen atom to form the C-terminus of the beta chain, while the remainder of the serine residue undergoes an oxidative deamination to produce ammonia and the pyruvoyl prosthetic group on the alpha chain. During this reaction, the Ser that is part of the protease active site of the proenzyme becomes the pyruvoyl prosthetic group, which constitutes an essential element of the active site of the mature decarboxylase.

Its subcellular location is the cell membrane. The catalysed reaction is a 1,2-diacyl-sn-glycero-3-phospho-L-serine + H(+) = a 1,2-diacyl-sn-glycero-3-phosphoethanolamine + CO2. It participates in phospholipid metabolism; phosphatidylethanolamine biosynthesis; phosphatidylethanolamine from CDP-diacylglycerol: step 2/2. Functionally, catalyzes the formation of phosphatidylethanolamine (PtdEtn) from phosphatidylserine (PtdSer). This chain is Phosphatidylserine decarboxylase proenzyme, found in Saccharophagus degradans (strain 2-40 / ATCC 43961 / DSM 17024).